Here is a 288-residue protein sequence, read N- to C-terminus: Phosphatidylserine decarboxylase proenzyme (288 aa).

Residues Asp-90, His-147, and Ser-254 each act as charge relay system; for autoendoproteolytic cleavage activity in the active site. The active-site Schiff-base intermediate with substrate; via pyruvic acid; for decarboxylase activity is the Ser-254. At Ser-254 the chain carries Pyruvic acid (Ser); by autocatalysis.

Belongs to the phosphatidylserine decarboxylase family. PSD-B subfamily. Prokaryotic type I sub-subfamily. As to quaternary structure, heterodimer of a large membrane-associated beta subunit and a small pyruvoyl-containing alpha subunit. Pyruvate serves as cofactor. In terms of processing, is synthesized initially as an inactive proenzyme. Formation of the active enzyme involves a self-maturation process in which the active site pyruvoyl group is generated from an internal serine residue via an autocatalytic post-translational modification. Two non-identical subunits are generated from the proenzyme in this reaction, and the pyruvate is formed at the N-terminus of the alpha chain, which is derived from the carboxyl end of the proenzyme. The autoendoproteolytic cleavage occurs by a canonical serine protease mechanism, in which the side chain hydroxyl group of the serine supplies its oxygen atom to form the C-terminus of the beta chain, while the remainder of the serine residue undergoes an oxidative deamination to produce ammonia and the pyruvoyl prosthetic group on the alpha chain. During this reaction, the Ser that is part of the protease active site of the proenzyme becomes the pyruvoyl prosthetic group, which constitutes an essential element of the active site of the mature decarboxylase.

The protein localises to the cell membrane. It catalyses the reaction a 1,2-diacyl-sn-glycero-3-phospho-L-serine + H(+) = a 1,2-diacyl-sn-glycero-3-phosphoethanolamine + CO2. It functions in the pathway phospholipid metabolism; phosphatidylethanolamine biosynthesis; phosphatidylethanolamine from CDP-diacylglycerol: step 2/2. Functionally, catalyzes the formation of phosphatidylethanolamine (PtdEtn) from phosphatidylserine (PtdSer). This Hamiltonella defensa subsp. Acyrthosiphon pisum (strain 5AT) protein is Phosphatidylserine decarboxylase proenzyme.